A 440-amino-acid chain; its full sequence is Aspartokinase (440 aa).

Belongs to the aspartokinase family.

The catalysed reaction is L-aspartate + ATP = 4-phospho-L-aspartate + ADP. It participates in amino-acid biosynthesis; L-lysine biosynthesis via DAP pathway; (S)-tetrahydrodipicolinate from L-aspartate: step 1/4. Its pathway is amino-acid biosynthesis; L-methionine biosynthesis via de novo pathway; L-homoserine from L-aspartate: step 1/3. The protein operates within amino-acid biosynthesis; L-threonine biosynthesis; L-threonine from L-aspartate: step 1/5. This is Aspartokinase (lysC) from Chlamydia pneumoniae (Chlamydophila pneumoniae).